The primary structure comprises 184 residues: Ribosome maturation factor RimM (184 aa).

Residues 106-184 (PGDYYWYQLE…RMIVDWDPEF (79 aa)) enclose the PRC barrel domain.

It belongs to the RimM family. In terms of assembly, binds ribosomal protein uS19.

The protein resides in the cytoplasm. An accessory protein needed during the final step in the assembly of 30S ribosomal subunit, possibly for assembly of the head region. Essential for efficient processing of 16S rRNA. May be needed both before and after RbfA during the maturation of 16S rRNA. It has affinity for free ribosomal 30S subunits but not for 70S ribosomes. This chain is Ribosome maturation factor RimM, found in Chromohalobacter salexigens (strain ATCC BAA-138 / DSM 3043 / CIP 106854 / NCIMB 13768 / 1H11).